The chain runs to 295 residues: MTDTSTTARRIVFVTGPSGAGRSSALNVLEDAGFEVVDNLPLRLLDAFLDVPSSAQPLALGIDPRNRDFSTTVIVDALGKLTGIPGLAPELLYLDCSTEVLLRRFSETRRRHPLAPVDRPSEGIVRELEMLGPLKARADVLIDTTHLNVHELRAEVEHWFAPGGKRRLSVSVQSFSYKRGLPRSVDMVFDCRFLTNPYWVPELRSLNGTHDLVKKYVTADARFEQFARKVDDLSLLLLPAYRDEGKSYLSIAFGCTGGQHRSVVMAQCHALRLAEEGWQVSIRHRELDLRKNEET.

Residue 16 to 23 coordinates ATP; the sequence is GPSGAGRS. Residue 63–66 coordinates GTP; the sequence is DPRN.

This sequence belongs to the RapZ-like family.

Displays ATPase and GTPase activities. This chain is Nucleotide-binding protein RD1_1380, found in Roseobacter denitrificans (strain ATCC 33942 / OCh 114) (Erythrobacter sp. (strain OCh 114)).